A 282-amino-acid chain; its full sequence is Undecaprenyl-diphosphatase (282 aa).

7 helical membrane-spanning segments follow: residues 39–59 (PGAA…LIYF), 85–105 (ATMG…GLLF), 115–135 (SLYW…LTEV), 153–173 (IGWK…IPGS), 196–216 (FSFL…LYET), 230–250 (LLVA…FLIT), and 260–280 (FIIY…TGAI).

It belongs to the UppP family.

Its subcellular location is the cell inner membrane. It catalyses the reaction di-trans,octa-cis-undecaprenyl diphosphate + H2O = di-trans,octa-cis-undecaprenyl phosphate + phosphate + H(+). Catalyzes the dephosphorylation of undecaprenyl diphosphate (UPP). Confers resistance to bacitracin. The sequence is that of Undecaprenyl-diphosphatase from Chlorobium chlorochromatii (strain CaD3).